The following is a 299-amino-acid chain: Protoheme IX farnesyltransferase (299 aa).

9 helical membrane-spanning segments follow: residues 29-49 (VVTLMLLTVLVGMCLALPGAV), 51-71 (LQPLIAGMLGIAMMAGAAAAM), 100-120 (HAATFAALLALLGFACLYWLV), 123-143 (LTAWLTLASLLGYAVVYTAYL), 150-170 (NIVIGGLAGAMPPLLGWTAVT), 177-197 (GLLLVIIIFAWTPPHFWALAI), 223-243 (CIFLYTILLALACLLPVLVGM), 244-264 (SGALYLLGSTLLSIGFIYKAW), and 275-295 (AMDVFRFSIYHLMLLFILLLV).

Belongs to the UbiA prenyltransferase family. Protoheme IX farnesyltransferase subfamily.

Its subcellular location is the cell inner membrane. It catalyses the reaction heme b + (2E,6E)-farnesyl diphosphate + H2O = Fe(II)-heme o + diphosphate. It participates in porphyrin-containing compound metabolism; heme O biosynthesis; heme O from protoheme: step 1/1. Functionally, converts heme B (protoheme IX) to heme O by substitution of the vinyl group on carbon 2 of heme B porphyrin ring with a hydroxyethyl farnesyl side group. The polypeptide is Protoheme IX farnesyltransferase (Shewanella amazonensis (strain ATCC BAA-1098 / SB2B)).